Consider the following 433-residue polypeptide: Voltage-gated potassium channel regulatory subunit KCNG3 (433 aa).

Topologically, residues 1-165 are cytoplasmic; the sequence is MTFGRGGAAS…RTFEEPTSSL (165 aa). Residues 166-187 traverse the membrane as a helical segment; that stretch reads AAQILASVSVVFVIVSMVVLCA. Over 188-217 the chain is Extracellular; that stretch reads STLPDWRAAVADNRSLDDRSRYSASPGREP. The helical transmembrane segment at 218-239 threads the bilayer; that stretch reads SGIIEAICIGWFTAECIVRFIV. The Cytoplasmic segment spans residues 240–250; sequence SKNKCEFVKRP. Residues 251–271 form a helical membrane-spanning segment; sequence LNIIDLLAITPYYISVLMTVF. Residues 272–281 lie on the Extracellular side of the membrane; the sequence is TGENSQLQRA. The chain crosses the membrane as a helical; Voltage-sensor span at residues 282–302; it reads GVTLRVLRMMRIFWVIKLARH. Topologically, residues 303 to 317 are cytoplasmic; the sequence is FIGLQTLGLTLKRCY. Residues 318–339 form a helical membrane-spanning segment; that stretch reads REMAMLLVFICVAMAIFSALSQ. Residues 340–357 lie on the Extracellular side of the membrane; the sequence is LLEHGLDLETSNKDFASI. The helical intramembrane region spans 358–369; it reads PAACWWVIISMT. A Selectivity filter motif is present at residues 370–375; it reads TVGYGD. Residues 370–377 lie within the membrane without spanning it; sequence TVGYGDMY. The Extracellular portion of the chain corresponds to 378–384; sequence PITVPGR. A helical transmembrane segment spans residues 385–413; sequence ILGGVCVVSGIVLLALPITFIYHSFVQCY. Residues 414 to 433 lie on the Cytoplasmic side of the membrane; it reads HELKFRSARYSRSLSAEFLN.

This sequence belongs to the potassium channel family. G (TC 1.A.1.2) subfamily. Kv6.3/KCNG3 sub-subfamily. Heterotetramer with KCNB1. Does not form homomultimers.

The protein localises to the cell membrane. It localises to the cytoplasm. In terms of biological role, regulatory subunit of the voltage-gated potassium (Kv) channel which, when coassembled with KCNB1, modulates the kinetics parameters of the heterotetrameric channel namely the inactivation and deactivation rate. Potassium channel subunit that does not form functional channels by itself. Reduces the deactivation rate. Moderately acceleratee activation. The protein is Voltage-gated potassium channel regulatory subunit KCNG3 of Mus musculus (Mouse).